The following is a 176-amino-acid chain: Acireductone dioxygenase (176 aa).

Residues H81, H83, E87, and H126 each coordinate Fe(2+). Ni(2+)-binding residues include H81, H83, E87, and H126.

This sequence belongs to the acireductone dioxygenase (ARD) family. Requires Fe(2+) as cofactor. The cofactor is Ni(2+).

It is found in the cytoplasm. It localises to the nucleus. The catalysed reaction is 1,2-dihydroxy-5-(methylsulfanyl)pent-1-en-3-one + O2 = 4-methylsulfanyl-2-oxobutanoate + formate + 2 H(+). It catalyses the reaction 1,2-dihydroxy-5-(methylsulfanyl)pent-1-en-3-one + O2 = 3-(methylsulfanyl)propanoate + CO + formate + 2 H(+). It participates in amino-acid biosynthesis; L-methionine biosynthesis via salvage pathway; L-methionine from S-methyl-5-thio-alpha-D-ribose 1-phosphate: step 5/6. Its function is as follows. Catalyzes 2 different reactions between oxygen and the acireductone 1,2-dihydroxy-3-keto-5-methylthiopentene (DHK-MTPene) depending upon the metal bound in the active site. Fe-containing acireductone dioxygenase (Fe-ARD) produces formate and 2-keto-4-methylthiobutyrate (KMTB), the alpha-ketoacid precursor of methionine in the methionine recycle pathway. Ni-containing acireductone dioxygenase (Ni-ARD) produces methylthiopropionate, carbon monoxide and formate, and does not lie on the methionine recycle pathway. The chain is Acireductone dioxygenase (adi1) from Sclerotinia sclerotiorum (strain ATCC 18683 / 1980 / Ss-1) (White mold).